Consider the following 242-residue polypeptide: Caffeoyl-CoA O-methyltransferase 2 (242 aa).

Lys16 lines the substrate pocket. S-adenosyl-L-methionine contacts are provided by residues Thr58, Glu80, 82–83 (GV), Ser88, Asp106, and Ala135. A substrate-binding site is contributed by Asp158. Asp158 is an a divalent metal cation binding site. Asp160 provides a ligand contact to S-adenosyl-L-methionine. A divalent metal cation-binding residues include Asp184 and Asn185. Asn189 lines the substrate pocket.

It belongs to the class I-like SAM-binding methyltransferase superfamily. Cation-dependent O-methyltransferase family. CCoAMT subfamily. Requires a divalent metal cation as cofactor. In terms of tissue distribution, mostly expressed in petal limbs and tubes, and, at low levels, in stems, roots and leaves.

The protein resides in the cytoplasm. It localises to the cytosol. It catalyses the reaction (E)-caffeoyl-CoA + S-adenosyl-L-methionine = (E)-feruloyl-CoA + S-adenosyl-L-homocysteine + H(+). It carries out the reaction (E)-5-hydroxyferuloyl-CoA + S-adenosyl-L-methionine = (E)-sinapoyl-CoA + S-adenosyl-L-homocysteine + H(+). The protein operates within aromatic compound metabolism; phenylpropanoid biosynthesis. Functionally, involved in the production of floral volatile phenylpropanoids in flowers of fragrant cultivars (e.g. cv. Mitchell and cv. V26) from cinnamic acid, a common precursor with the anthocyanin biosynthesis pathway involved in flower pigmentation. Methylates caffeoyl-CoA to feruloyl-CoA, also able to methylate 5-hydroxyferuloyl-CoA. This is Caffeoyl-CoA O-methyltransferase 2 from Petunia hybrida (Petunia).